A 496-amino-acid chain; its full sequence is Pre-glycoprotein polyprotein GP complex (496 aa).

A lipid anchor (N-myristoyl glycine; by host) is attached at G2. Residues 2–17 (GQLISFFQEIPVFLQE) lie on the Extracellular side of the membrane. A helical transmembrane segment spans residues 18–32 (ALNIALVAVSLIAVI). Position 33 (K33) is a topological domain, cytoplasmic. Residues 34-53 (GIINLYKSGLFQFIFFLLLA) form a helical membrane-spanning segment. Extracellular segments lie at residues 54–58 (GRSCS) and 59–435 (DGTF…TLVD). C57 lines the Zn(2+) pocket. N-linked (GlcNAc...) asparagine; by host glycans are attached at residues N83, N95, N137, N166, and N178. Intrachain disulfides connect C92-C237, C135-C164, C207-C213, C282-C295, C304-C313, and C367-C388. 4 N-linked (GlcNAc...) asparagine; by host glycosylation sites follow: N368, N376, N393, and N398. The chain crosses the membrane as a helical span at residues 436–456 (ICFWSTVFFTASLFLHLVGIP). Residues 457-496 (THRHLKGEACPLPHKLDSFGGCRCGKYPRLRKPTIWHKRH) lie on the Cytoplasmic side of the membrane. Residues H458, H460, C466, H470, C478, C480, and H496 each contribute to the Zn(2+) site.

It belongs to the arenaviridae GPC protein family. In terms of assembly, homotetramer; disulfide-linked. Interacts with host TFRC. Homotetramer. GP2 homotetramers bind through ionic interactions with GP1 homotetramers to form the GP complex together with the stable signal peptide. The GP-C polyprotein interacts with the host protease MBTPS1/SKI-1 resulting in the polyprotein processing. Post-translationally, specific enzymatic cleavages in vivo yield mature proteins. GP-C polyprotein is cleaved in the endoplasmic reticulum by the host protease MBTPS1. Only cleaved glycoprotein is incorporated into virions. The SSP remains stably associated with the GP complex following cleavage by signal peptidase and plays crucial roles in the trafficking of GP through the secretory pathway. In terms of processing, myristoylation is necessary for GP2-mediated fusion activity.

It is found in the virion membrane. Its subcellular location is the host endoplasmic reticulum membrane. The protein localises to the host Golgi apparatus membrane. It localises to the host cell membrane. Class I viral fusion protein that directs fusion of viral and host endosomal membranes, leading to delivery of the nucleocapsid into the cytoplasm. Membrane fusion is mediated by irreversible conformational changes induced upon acidification in the endosome. Functionally, stable signal peptide (SSP): cleaved and functions as a signal peptide. In addition, it is also retained as the third component of the GP complex. The SSP is required for efficient glycoprotein expression, post-translational maturation cleavage of GP1 and GP2, glycoprotein transport to the cell surface plasma membrane, formation of infectious virus particles, and acid pH-dependent glycoprotein-mediated cell fusion. In terms of biological role, interacts with the host receptor. Mediates virus attachment to host TFRC. This attachment induces virion internalization predominantly through clathrin-mediated endocytosis. This Machupo virus (MACV) protein is Pre-glycoprotein polyprotein GP complex.